Reading from the N-terminus, the 154-residue chain is Myoglobin (154 aa).

The Globin domain occupies 2 to 148 (GLSDDEWNHV…FRNDMASKYK (147 aa)). H65 provides a ligand contact to nitrite. H65 is a binding site for O2. Position 94 (H94) interacts with heme b.

The protein belongs to the globin family. Monomeric.

It localises to the cytoplasm. It is found in the sarcoplasm. The enzyme catalyses Fe(III)-heme b-[protein] + nitric oxide + H2O = Fe(II)-heme b-[protein] + nitrite + 2 H(+). The catalysed reaction is H2O2 + AH2 = A + 2 H2O. Its function is as follows. Monomeric heme protein which primary function is to store oxygen and facilitate its diffusion within muscle tissues. Reversibly binds oxygen through a pentacoordinated heme iron and enables its timely and efficient release as needed during periods of heightened demand. Depending on the oxidative conditions of tissues and cells, and in addition to its ability to bind oxygen, it also has a nitrite reductase activity whereby it regulates the production of bioactive nitric oxide. Under stress conditions, like hypoxia and anoxia, it also protects cells against reactive oxygen species thanks to its pseudoperoxidase activity. The polypeptide is Myoglobin (MB) (Chelonia mydas (Green sea-turtle)).